The sequence spans 191 residues: Inosine triphosphate pyrophosphatase (191 aa).

12–17 serves as a coordination point for ITP; that stretch reads TGNANK. A Mg(2+)-binding site is contributed by Glu42. ITP is bound by residues Lys54, 70-71, Lys87, 145-148, Lys168, and 173-174; these read DT, FGWD, and HR.

This sequence belongs to the HAM1 NTPase family. Homodimer. Requires Mg(2+) as cofactor. Mn(2+) serves as cofactor.

It localises to the cytoplasm. The enzyme catalyses ITP + H2O = IMP + diphosphate + H(+). It carries out the reaction dITP + H2O = dIMP + diphosphate + H(+). The catalysed reaction is XTP + H2O = XMP + diphosphate + H(+). Functionally, pyrophosphatase that hydrolyzes non-canonical purine nucleotides such as inosine triphosphate (ITP), deoxyinosine triphosphate (dITP) or xanthosine 5'-triphosphate (XTP) to their respective monophosphate derivatives. The enzyme does not distinguish between the deoxy- and ribose forms. Probably excludes non-canonical purines from RNA and DNA precursor pools, thus preventing their incorporation into RNA and DNA and avoiding chromosomal lesions. This is Inosine triphosphate pyrophosphatase from Phytophthora infestans (strain T30-4) (Potato late blight agent).